The sequence spans 274 residues: 2,3,4,5-tetrahydropyridine-2,6-dicarboxylate N-succinyltransferase (274 aa).

2 residues coordinate substrate: R106 and D143.

It belongs to the transferase hexapeptide repeat family. Homotrimer.

It localises to the cytoplasm. It catalyses the reaction (S)-2,3,4,5-tetrahydrodipicolinate + succinyl-CoA + H2O = (S)-2-succinylamino-6-oxoheptanedioate + CoA. The protein operates within amino-acid biosynthesis; L-lysine biosynthesis via DAP pathway; LL-2,6-diaminopimelate from (S)-tetrahydrodipicolinate (succinylase route): step 1/3. The sequence is that of 2,3,4,5-tetrahydropyridine-2,6-dicarboxylate N-succinyltransferase from Rickettsia akari (strain Hartford).